Reading from the N-terminus, the 477-residue chain is Dihydrolipoyl dehydrogenase (477 aa).

Residues 41–50 (EKRGALGGTC), lysine 59, glycine 124, and 153–155 (TGS) contribute to the FAD site. Cysteines 50 and 55 form a disulfide. NAD(+) contacts are provided by residues 190 to 197 (GGGVIGLE), glutamate 213, valine 248, and glycine 282. Residues aspartate 323 and 330–333 (MLAH) each bind FAD. The active-site Proton acceptor is histidine 456.

Belongs to the class-I pyridine nucleotide-disulfide oxidoreductase family. As to quaternary structure, homodimer. FAD serves as cofactor.

It catalyses the reaction N(6)-[(R)-dihydrolipoyl]-L-lysyl-[protein] + NAD(+) = N(6)-[(R)-lipoyl]-L-lysyl-[protein] + NADH + H(+). The protein is Dihydrolipoyl dehydrogenase (LPD) of Trypanosoma cruzi.